Reading from the N-terminus, the 155-residue chain is Transcriptional regulator MraZ (155 aa).

SpoVT-AbrB domains lie at 7–63 (REQH…EPSV) and 92–135 (LDQT…EPLR).

The protein belongs to the MraZ family. As to quaternary structure, forms oligomers.

It localises to the cytoplasm. The protein localises to the nucleoid. The sequence is that of Transcriptional regulator MraZ from Chlorobaculum tepidum (strain ATCC 49652 / DSM 12025 / NBRC 103806 / TLS) (Chlorobium tepidum).